A 959-amino-acid polypeptide reads, in one-letter code: Translation initiation factor IF-2 (959 aa).

The segment covering 1 to 10 has biased composition (basic and acidic residues); sequence MSDKTNDDKT. Residues 1-374 are disordered; it reads MSDKTNDDKT…SQMQETREKI (374 aa). Polar residues predominate over residues 27 to 37; it reads EQSTVRQNFSH. Composition is skewed to low complexity over residues 63-118 and 128-138; these read AAAA…VTKP and QRPGGQQAQRP. Basic and acidic residues-rich tracts occupy residues 154–225 and 232–241; these read SEMD…EAAK and ARSERRDDAR. Over residues 246–284 the composition is skewed to low complexity; that stretch reads GARPQQAGRPQGGRPQPAGRPQQGSPRPAPIIADAAPIA. The segment covering 318–333 has biased composition (basic and acidic residues); the sequence is PEVRAPKVVKGEDDRR. The tr-type G domain occupies 457–626; the sequence is SRPPVVTIMG…LLQAEMLDLK (170 aa). The G1 stretch occupies residues 466 to 473; sequence GHVDHGKT. Position 466-473 (466-473) interacts with GTP; it reads GHVDHGKT. Residues 491–495 form a G2 region; sequence GITQH. Positions 512–515 are G3; sequence DTPG. Residues 512–516 and 566–569 contribute to the GTP site; these read DTPGH and NKID. The interval 566–569 is G4; the sequence is NKID. The interval 602–604 is G5; that stretch reads SAK.

It belongs to the TRAFAC class translation factor GTPase superfamily. Classic translation factor GTPase family. IF-2 subfamily.

The protein resides in the cytoplasm. One of the essential components for the initiation of protein synthesis. Protects formylmethionyl-tRNA from spontaneous hydrolysis and promotes its binding to the 30S ribosomal subunits. Also involved in the hydrolysis of GTP during the formation of the 70S ribosomal complex. This chain is Translation initiation factor IF-2, found in Brucella melitensis biotype 1 (strain ATCC 23456 / CCUG 17765 / NCTC 10094 / 16M).